The chain runs to 394 residues: Chorismate synthase (394 aa).

NADP(+) contacts are provided by arginine 40 and arginine 46. Residues 135-137 and 255-256 contribute to the FMN site; these read RAS and QA. The segment at 270–291 is disordered; the sequence is RRRGSGAHDEIEPAGAGSRRVR. FMN-binding positions include glycine 302, 317–321, and arginine 343; that span reads KPISS.

The protein belongs to the chorismate synthase family. Homotetramer. FMNH2 is required as a cofactor.

It carries out the reaction 5-O-(1-carboxyvinyl)-3-phosphoshikimate = chorismate + phosphate. The protein operates within metabolic intermediate biosynthesis; chorismate biosynthesis; chorismate from D-erythrose 4-phosphate and phosphoenolpyruvate: step 7/7. Catalyzes the anti-1,4-elimination of the C-3 phosphate and the C-6 proR hydrogen from 5-enolpyruvylshikimate-3-phosphate (EPSP) to yield chorismate, which is the branch point compound that serves as the starting substrate for the three terminal pathways of aromatic amino acid biosynthesis. This reaction introduces a second double bond into the aromatic ring system. The polypeptide is Chorismate synthase (Frankia casuarinae (strain DSM 45818 / CECT 9043 / HFP020203 / CcI3)).